The following is a 341-amino-acid chain: MASEAPPFWWDEPDWRALALAPAAWIYGRVSGRRLIRAVPPRVSLPVLCVGNFTVGGAGKTPTAIAFARGAIARGMKPGIVSRGYGGNYSGLHLVDPGHDGARHVGDEPLLLARHAAVALSPDRVKAAEYLKSLGCDFIIMDDGFQSARLHADFSLLVVDASRGIGNGRVIPAGPLRAPLTDQMRKTDALLCIGKGNGADFVIRQAARAGRPIYHAQLRSSSSATVAGRRWLAFAGIGNPDKFYESVRQAGGEVVETHSFADHYSFEPDDIRGLVDMARRQGLGLITTAKDHVRLATMPGVPPEFLSKLAVLDVDLEFDRTDALDHILDTVVERFKSRLHG.

54–61 (TVGGAGKT) provides a ligand contact to ATP.

It belongs to the LpxK family.

The enzyme catalyses a lipid A disaccharide + ATP = a lipid IVA + ADP + H(+). It functions in the pathway glycolipid biosynthesis; lipid IV(A) biosynthesis; lipid IV(A) from (3R)-3-hydroxytetradecanoyl-[acyl-carrier-protein] and UDP-N-acetyl-alpha-D-glucosamine: step 6/6. In terms of biological role, transfers the gamma-phosphate of ATP to the 4'-position of a tetraacyldisaccharide 1-phosphate intermediate (termed DS-1-P) to form tetraacyldisaccharide 1,4'-bis-phosphate (lipid IVA). This chain is Tetraacyldisaccharide 4'-kinase, found in Brucella suis (strain ATCC 23445 / NCTC 10510).